The sequence spans 337 residues: Fructose-1,6-bisphosphatase class 1 (337 aa).

Mg(2+)-binding residues include E90, D112, L114, and D115. Residues 115–118, N211, and K277 each bind substrate; that span reads DGSS. E283 is a Mg(2+) binding site.

Belongs to the FBPase class 1 family. In terms of assembly, homotetramer. The cofactor is Mg(2+).

It localises to the cytoplasm. It carries out the reaction beta-D-fructose 1,6-bisphosphate + H2O = beta-D-fructose 6-phosphate + phosphate. It participates in carbohydrate biosynthesis; gluconeogenesis. The polypeptide is Fructose-1,6-bisphosphatase class 1 (Azotobacter vinelandii (strain DJ / ATCC BAA-1303)).